The sequence spans 507 residues: MSDVNAWWVGGSLLLGIWAIVVFFSPDPLAQYPVINSKRPGELFYTQSKIRFITQARSLLKEGLSKTNNAFRLVTNNRILLVLHSKYRNELRDHKSLNNTKPPEDDFFGWLQGFEPFNHVKTNPKVFAAMVRTKLTPSIGAVGIPLSEETDFVLQQQLTDSPEWHQINVKETSLQLVARLSARIFLGPQVCRNPAWIGIMINYTVEAFMTAERLRMWPRWLLWLVHWFLPSCKKLRSQVQEARGIISQVLQQRERNRKRAFLETEASDEVDTVQWLEDCAKGGYYDPALLQMGLAVVATHTSADLLSQVIFDLCEHPELLQPLREEIVTVITQHGWSKNAIYNLKLLDSVLKESQRLKPMQIISLYRYVTADITLSDGTLIPKGTYIAMIDDHSLDPNSSYTNGDRYDGYRFINMREVPERSHQTQLVSVSSDHTGFGFGNHACPGRFFAATELKIALCHLLLKYDLKLGDQKPQAMTYGFGLSSDPFTQISVRRRQEEISLAGSKS.

A helical transmembrane segment spans residues 4 to 24; that stretch reads VNAWWVGGSLLLGIWAIVVFF. Asparagine 98, asparagine 202, and asparagine 398 each carry an N-linked (GlcNAc...) asparagine glycan. Cysteine 444 contacts heme.

The protein belongs to the cytochrome P450 family. It depends on heme as a cofactor.

The protein resides in the membrane. Its pathway is secondary metabolite biosynthesis. In terms of biological role, cytochrome P450 monooxygenase; part of the gene cluster that mediates the biosynthesis of the indole diterpenes penitrems. The geranylgeranyl diphosphate (GGPP) synthase ptmG catalyzes the first step in penitrem biosynthesis via conversion of farnesyl pyrophosphate and isopentyl pyrophosphate into geranylgeranyl pyrophosphate (GGPP). Condensation of indole-3-glycerol phosphate with GGPP by the prenyl transferase ptmC then forms 3-geranylgeranylindole (3-GGI). Epoxidation by the FAD-dependent monooxygenase ptmM leads to a epoxidized-GGI that is substrate of the terpene cyclase ptmB for cyclization to yield paspaline. Paspaline is subsequently converted to 13-desoxypaxilline by the cytochrome P450 monooxygenase ptmP, the latter being then converted to paxilline by the cytochrome P450 monooxygenase ptmQ. Paxilline is converted to beta-paxitriol via C-10 ketoreduction by the short-chain dehydrogenase ptmH which can be monoprenylated at the C-20 by the indole diterpene prenyltransferase ptmD. A two-step elimination (acetylation and elimination) process performed by the O-acetyltransferase ptmV and ptmI leads to the production of the prenylated form of penijanthine. The FAD-linked oxidoreductase ptmO then converts the prenylated form of penijanthine into PC-M5 which is in turn transformed into PC-M4 by the aromatic dimethylallyltransferase ptmE. Five sequential oxidative transformations performed by the cytochrome P450 monooxygenases ptmK, ptmU, ptmL, ptmN and ptmJ yield the various penitrem compounds. PtmK, ptmU and ptmM are involved in the formation of the key bicyclic ring of penitrem C via the formation of the intermediates secopenitrem D and penitrem D. PtmL catalyzes the epoxidation of penitrem D and C to yield penitrem B and F, respectively. PtmJ catalyzes the last benzylic hydroxylation to convert penitrem B to prenitrem E and penitrem F to penitrem A. The chain is Cytochrome P450 monooxygenase ptmU from Penicillium ochrochloron.